Consider the following 323-residue polypeptide: Aldo-keto reductase family 1 member C1 (323 aa).

NADP(+) is bound by residues 20–24 (GFGTY) and Asp-50. Tyr-24 is a substrate binding site. The active-site Proton donor is the Tyr-55. His-117 serves as a coordination point for substrate. Residues 166-167 (SN), Gln-190, and 216-222 (YSALGSH) contribute to the NADP(+) site. 2 residues coordinate substrate: His-222 and Trp-227. 270–280 (KSYNEQRIRQN) is a binding site for NADP(+).

The protein belongs to the aldo/keto reductase family. Monomer.

The protein resides in the cytoplasm. Its subcellular location is the cytosol. It catalyses the reaction a 3alpha-hydroxysteroid + NADP(+) = a 3-oxosteroid + NADPH + H(+). The catalysed reaction is a 3alpha-hydroxysteroid + NAD(+) = a 3-oxosteroid + NADH + H(+). The enzyme catalyses (17R,20S)-17,20-dihydroxypregn-4-en-3-one + NADP(+) = 17alpha-hydroxyprogesterone + NADPH + H(+). It carries out the reaction (17R,20S)-17,20-dihydroxypregn-4-en-3-one + NAD(+) = 17alpha-hydroxyprogesterone + NADH + H(+). It catalyses the reaction (20S)-hydroxypregn-4-en-3-one + NADP(+) = progesterone + NADPH + H(+). The catalysed reaction is (20S)-hydroxypregn-4-en-3-one + NAD(+) = progesterone + NADH + H(+). The enzyme catalyses (1R,2R)-1,2-dihydrobenzene-1,2-diol + NADP(+) = catechol + NADPH + H(+). It carries out the reaction (S)-indan-1-ol + NAD(+) = indan-1-one + NADH + H(+). It catalyses the reaction (S)-indan-1-ol + NADP(+) = indan-1-one + NADPH + H(+). The catalysed reaction is 5alpha-androstane-3alpha,17beta-diol + NADP(+) = 17beta-hydroxy-5alpha-androstan-3-one + NADPH + H(+). The enzyme catalyses 5alpha-androstane-3beta,17beta-diol + NADP(+) = 17beta-hydroxy-5alpha-androstan-3-one + NADPH + H(+). It carries out the reaction 5alpha-androstane-3alpha,17beta-diol + NAD(+) = 17beta-hydroxy-5alpha-androstan-3-one + NADH + H(+). It catalyses the reaction 17beta-hydroxy-5alpha-androstan-3-one + NADP(+) = 5alpha-androstan-3,17-dione + NADPH + H(+). The catalysed reaction is androsterone + NADP(+) = 5alpha-androstan-3,17-dione + NADPH + H(+). The enzyme catalyses androsterone + NADPH + H(+) = 5alpha-androstane-3alpha,17beta-diol + NADP(+). It carries out the reaction 5alpha-androstane-3alpha,17beta-diol + NAD(+) = androsterone + NADH + H(+). It catalyses the reaction 17beta-estradiol + NADP(+) = estrone + NADPH + H(+). The catalysed reaction is 17beta-estradiol + NAD(+) = estrone + NADH + H(+). The enzyme catalyses testosterone + NADP(+) = androst-4-ene-3,17-dione + NADPH + H(+). It carries out the reaction 20alpha-hydroxy-5beta-pregnan-3-one + NADP(+) = 5beta-pregnan-3,20-dione + NADPH + H(+). It catalyses the reaction 3beta-hydroxy-5beta-pregnane-20-one + NADP(+) = 5beta-pregnan-3,20-dione + NADPH + H(+). The catalysed reaction is 3beta-hydroxy-5beta-pregnane-20-one + NADPH + H(+) = 3beta,20alpha-dihydroxy-5beta-pregnane + NADP(+). The enzyme catalyses (3beta,5alpha,17beta)-3-hydroxyandrostan-17-yl sulfate + NADP(+) = 5alpha-dihydrotestosterone sulfate + NADPH + H(+). Its pathway is steroid metabolism. Its function is as follows. Cytosolic aldo-keto reductase that catalyzes the NADH and NADPH-dependent reduction of ketosteroids to hydroxysteroids. Most probably acts as a reductase in vivo since the oxidase activity measured in vitro is inhibited by physiological concentrations of NADPH. Displays a broad positional specificity acting on positions 3, 17 and 20 of steroids and regulates the metabolism of hormones like estrogens and androgens. May also reduce conjugated steroids such as 5alpha-dihydrotestosterone sulfate. Displays affinity for bile acids. In Pongo abelii (Sumatran orangutan), this protein is Aldo-keto reductase family 1 member C1 (AKR1C1).